The chain runs to 69 residues: Putative membrane protein insertion efficiency factor (69 aa).

It belongs to the UPF0161 family.

The protein resides in the cell membrane. Its function is as follows. Could be involved in insertion of integral membrane proteins into the membrane. The chain is Putative membrane protein insertion efficiency factor from Clostridium kluyveri (strain NBRC 12016).